A 102-amino-acid polypeptide reads, in one-letter code: MQVTDVRLRRVETDGRMRAIASITLDEEFVVHDIRVIDGNNGLFVAMPSKRGVDGEFRDIAHPINSDTRAKIQEVVLAEYERVGEEEATAVTEEESESVSAE.

The protein belongs to the SpoVG family.

Functionally, could be involved in septation. The protein is Putative septation protein SpoVG 2 of Listeria innocua serovar 6a (strain ATCC BAA-680 / CLIP 11262).